A 115-amino-acid polypeptide reads, in one-letter code: Variant surface glycoprotein ANTAT 1.8 (115 aa).

Asn42 carries an N-linked (GlcNAc...) asparagine glycan. Asp92 carries the GPI-anchor amidated aspartate lipid modification. Residues 93-115 constitute a propeptide, removed in mature form; it reads SSILVNKQLALSVVSAAFAALLF.

Its subcellular location is the cell membrane. VSG forms a coat on the surface of the parasite. The trypanosome evades the immune response of the host by expressing a series of antigenically distinct VSGs from an estimated 1000 VSG genes. This Trypanosoma brucei brucei protein is Variant surface glycoprotein ANTAT 1.8.